The following is a 225-amino-acid chain: Platelet-activating factor acetylhydrolase IB subunit beta homolog (225 aa).

It belongs to the 'GDSL' lipolytic enzyme family. Platelet-activating factor acetylhydrolase IB beta/gamma subunits subfamily. In terms of assembly, does not interact with Lis-1.

This chain is Platelet-activating factor acetylhydrolase IB subunit beta homolog (Paf-AHalpha), found in Drosophila melanogaster (Fruit fly).